Reading from the N-terminus, the 168-residue chain is Large ribosomal subunit protein uL10 (168 aa).

It belongs to the universal ribosomal protein uL10 family. As to quaternary structure, part of the ribosomal stalk of the 50S ribosomal subunit. The N-terminus interacts with L11 and the large rRNA to form the base of the stalk. The C-terminus forms an elongated spine to which L12 dimers bind in a sequential fashion forming a multimeric L10(L12)X complex.

Its function is as follows. Forms part of the ribosomal stalk, playing a central role in the interaction of the ribosome with GTP-bound translation factors. This Acinetobacter baylyi (strain ATCC 33305 / BD413 / ADP1) protein is Large ribosomal subunit protein uL10.